Here is a 246-residue protein sequence, read N- to C-terminus: Salivary antigen SP32 (246 aa).

The first 23 residues, 1–23, serve as a signal peptide directing secretion; it reads MSGHILTVGLIVVVAHCATLSSS. Positions 51–160 are disordered; it reads DKFYPDISDD…PDLSKYKNSP (110 aa). The span at 65-78 shows a compositional bias: basic and acidic residues; it reads VVRDNGRKGGDRGR. Over residues 79–124 the composition is skewed to polar residues; sequence QSTPSGKESHPSATQTGGRRPSQSPCGESRPSGSATSGRRPSQSPR. Positions 141–155 are enriched in basic and acidic residues; sequence QQDRRQNKKQPDLSK.

Interacts with human DSG1. Interacts with human DSG3. In terms of tissue distribution, salivary gland (at protein level).

Its subcellular location is the secreted. Its function is as follows. Down-regulates the expression of CD86 and HLA-DR on the surface of lipopolysaccharide (LPS)-stimulated human peripheral blood mononuclear cells (PBMCs). Reduces LPS-induced secretion of IL-1beta/IL1B in human PBMCs. Reduces LPS-induced secretion of various cytokines, such as IL-1beta, TNF-alpha/TNF, MCP-1/CCL2, IL6, IL27 and IL-1alpha/IL1A, in host cultured macrophages probably via inhibition of NF-kappa-B signaling pathway. Reduces production of IFN-gamma/IFNG, IL4 and IL6 in human lymphocytes activated with PMA/ionomycin. Exhibits anti-inflammatory activity in carrageenan-induced paw edema model in rats. In Phlebotomus papatasi (Sandfly), this protein is Salivary antigen SP32.